Here is a 231-residue protein sequence, read N- to C-terminus: Uracil phosphoribosyltransferase (231 aa).

Position 38 to 42 (38 to 42 (KGLVR)) interacts with GTP. 5-phospho-alpha-D-ribose 1-diphosphate-binding positions include Arg87, Arg112, and 140-148 (DPMIATGST). Uracil contacts are provided by residues Ile203 and 208–210 (GDA). Asp209 provides a ligand contact to 5-phospho-alpha-D-ribose 1-diphosphate.

Belongs to the UPRTase family. The cofactor is Mg(2+).

The catalysed reaction is UMP + diphosphate = 5-phospho-alpha-D-ribose 1-diphosphate + uracil. The protein operates within pyrimidine metabolism; UMP biosynthesis via salvage pathway; UMP from uracil: step 1/1. Its activity is regulated as follows. Allosterically activated by GTP. Catalyzes the conversion of uracil and 5-phospho-alpha-D-ribose 1-diphosphate (PRPP) to UMP and diphosphate. The protein is Uracil phosphoribosyltransferase of Methanococcus maripaludis (strain C6 / ATCC BAA-1332).